The sequence spans 280 residues: UDP-3-O-acyl-N-acetylglucosamine deacetylase (280 aa).

Residues His-77, His-238, and Asp-242 each coordinate Zn(2+). His-265 serves as the catalytic Proton donor.

This sequence belongs to the LpxC family. It depends on Zn(2+) as a cofactor.

It catalyses the reaction a UDP-3-O-[(3R)-3-hydroxyacyl]-N-acetyl-alpha-D-glucosamine + H2O = a UDP-3-O-[(3R)-3-hydroxyacyl]-alpha-D-glucosamine + acetate. Its pathway is glycolipid biosynthesis; lipid IV(A) biosynthesis; lipid IV(A) from (3R)-3-hydroxytetradecanoyl-[acyl-carrier-protein] and UDP-N-acetyl-alpha-D-glucosamine: step 2/6. In terms of biological role, catalyzes the hydrolysis of UDP-3-O-myristoyl-N-acetylglucosamine to form UDP-3-O-myristoylglucosamine and acetate, the committed step in lipid A biosynthesis. This chain is UDP-3-O-acyl-N-acetylglucosamine deacetylase, found in Nostoc sp. (strain PCC 7120 / SAG 25.82 / UTEX 2576).